Here is a 92-residue protein sequence, read N- to C-terminus: Acylphosphatase (92 aa).

Residues 6–92 (RAHVYVSGRV…EGVDGFEIRR (87 aa)) form the Acylphosphatase-like domain. Residues Arg-21 and Asn-39 contribute to the active site.

It belongs to the acylphosphatase family.

The catalysed reaction is an acyl phosphate + H2O = a carboxylate + phosphate + H(+). This Natronomonas pharaonis (strain ATCC 35678 / DSM 2160 / CIP 103997 / JCM 8858 / NBRC 14720 / NCIMB 2260 / Gabara) (Halobacterium pharaonis) protein is Acylphosphatase (acyP).